The sequence spans 186 residues: Nuclear transcription factor Y subunit B-1 (186 aa).

Residues 1–24 (MAGNKKRGGRNMDQVKKAAVRSDG) are disordered. A DNA-binding region spans residues 34–40 (LPMANLV). Residues 61 to 72 (THDCAVEFVGFV) form a subunit association domain (SAD) region. The segment at 123 to 142 (GGNRRVAPPPPAAATPLTPG) is disordered.

It belongs to the NFYB/HAP3 subunit family. In terms of assembly, heterotrimeric transcription factor composed of three components, NF-YA, NF-YB and NF-YC. NF-YB and NF-YC must interact and dimerize for NF-YA association and DNA binding. Interacts with MADS18. Forms a ternary complex with the MADS6-MADS18 heterodimer. Expressed in developing kernels.

It localises to the nucleus. Functionally, component of the NF-Y/HAP transcription factor complex. The NF-Y complex stimulates the transcription of various genes by recognizing and binding to a CCAAT motif in promoters. May act through association with MADS-box proteins. May regulate the expression of genes involved in flowering. The sequence is that of Nuclear transcription factor Y subunit B-1 (NFYB1) from Oryza sativa subsp. japonica (Rice).